We begin with the raw amino-acid sequence, 136 residues long: Large ribosomal subunit protein uL16 (136 aa).

This sequence belongs to the universal ribosomal protein uL16 family. In terms of assembly, part of the 50S ribosomal subunit.

Binds 23S rRNA and is also seen to make contacts with the A and possibly P site tRNAs. This is Large ribosomal subunit protein uL16 from Ehrlichia canis (strain Jake).